The primary structure comprises 122 residues: Large ribosomal subunit protein uL14 (122 aa).

This sequence belongs to the universal ribosomal protein uL14 family. In terms of assembly, part of the 50S ribosomal subunit. Forms a cluster with proteins L3 and L19. In the 70S ribosome, L14 and L19 interact and together make contacts with the 16S rRNA in bridges B5 and B8.

Functionally, binds to 23S rRNA. Forms part of two intersubunit bridges in the 70S ribosome. The sequence is that of Large ribosomal subunit protein uL14 from Lactobacillus gasseri (strain ATCC 33323 / DSM 20243 / BCRC 14619 / CIP 102991 / JCM 1131 / KCTC 3163 / NCIMB 11718 / NCTC 13722 / AM63).